Reading from the N-terminus, the 320-residue chain is Ferrochelatase (320 aa).

H194 and E275 together coordinate Fe cation.

The protein belongs to the ferrochelatase family.

The protein localises to the cytoplasm. The enzyme catalyses heme b + 2 H(+) = protoporphyrin IX + Fe(2+). The protein operates within porphyrin-containing compound metabolism; protoheme biosynthesis; protoheme from protoporphyrin-IX: step 1/1. Catalyzes the ferrous insertion into protoporphyrin IX. The sequence is that of Ferrochelatase from Serratia proteamaculans (strain 568).